A 224-amino-acid polypeptide reads, in one-letter code: Oxalate oxidase GF-2.8 (224 aa).

The N-terminal stretch at 1–23 (MGYSKTLVAGLFAMLLLAPAVLA) is a signal peptide. A disulfide bridge connects residues C33 and C49. The Cupin type-1 domain occupies 63 to 214 (SKLAKAGNTS…ALRVEARVVE (152 aa)). Residues N70 and N75 are each glycosylated (N-linked (GlcNAc...) asparagine). 4 residues coordinate Mn(2+): H111, H113, E118, and H160.

Belongs to the germin family. As to quaternary structure, oligomer (believed to be a pentamer but probably hexamer).

It localises to the secreted. Its subcellular location is the extracellular space. The protein localises to the apoplast. The protein resides in the cytoplasm. It is found in the cell wall. It catalyses the reaction oxalate + O2 + 2 H(+) = H2O2 + 2 CO2. Functionally, produces developmental and stress-related release of hydrogen peroxide in the apoplast. May play an important role in several aspects of plant growth and defense mechanisms. The chain is Oxalate oxidase GF-2.8 from Triticum aestivum (Wheat).